A 147-amino-acid polypeptide reads, in one-letter code: Phospholipase A2 SSD1043 (147 aa).

A signal peptide spans 1–22; the sequence is MSPKFMFFSIIAVWSCAAVTEA. A propeptide spanning residues 23 to 28 is cleaved from the precursor; sequence LFIQHR. Intrachain disulfides connect C55/C71, C70/C130, C77/C123, C86/C116, and C109/C121. Residues G56 and G58 each coordinate Ca(2+). H74 is a catalytic residue. A Ca(2+)-binding site is contributed by D75. D124 is a catalytic residue.

It depends on Ca(2+) as a cofactor. As to expression, expressed by the venom gland.

It is found in the secreted. It carries out the reaction a 1,2-diacyl-sn-glycero-3-phosphocholine + H2O = a 1-acyl-sn-glycero-3-phosphocholine + a fatty acid + H(+). PLA2 catalyzes the calcium-dependent hydrolysis of the 2-acyl groups in 3-sn-phosphoglycerides. In Scolopendra dehaani (Thai centipede), this protein is Phospholipase A2 SSD1043.